A 698-amino-acid polypeptide reads, in one-letter code: Elongation factor G (698 aa).

In terms of domain architecture, tr-type G spans 8-290 (ERYRNIGISA…AVIELLPSPT (283 aa)). GTP-binding positions include 17-24 (AHIDAGKT), 88-92 (DTPGH), and 142-145 (NKMD).

This sequence belongs to the TRAFAC class translation factor GTPase superfamily. Classic translation factor GTPase family. EF-G/EF-2 subfamily.

The protein resides in the cytoplasm. Its function is as follows. Catalyzes the GTP-dependent ribosomal translocation step during translation elongation. During this step, the ribosome changes from the pre-translocational (PRE) to the post-translocational (POST) state as the newly formed A-site-bound peptidyl-tRNA and P-site-bound deacylated tRNA move to the P and E sites, respectively. Catalyzes the coordinated movement of the two tRNA molecules, the mRNA and conformational changes in the ribosome. This Chromobacterium violaceum (strain ATCC 12472 / DSM 30191 / JCM 1249 / CCUG 213 / NBRC 12614 / NCIMB 9131 / NCTC 9757 / MK) protein is Elongation factor G.